Reading from the N-terminus, the 307-residue chain is Glycine--tRNA ligase alpha subunit (307 aa).

This sequence belongs to the class-II aminoacyl-tRNA synthetase family. Tetramer of two alpha and two beta subunits.

The protein resides in the cytoplasm. It carries out the reaction tRNA(Gly) + glycine + ATP = glycyl-tRNA(Gly) + AMP + diphosphate. The chain is Glycine--tRNA ligase alpha subunit (glyQ) from Xylella fastidiosa (strain 9a5c).